The chain runs to 660 residues: Arginine--tRNA ligase, cytoplasmic (660 aa).

Met-1 bears the N-acetylmethionine mark. Positions 1-72 (MDVLVSECSA…QAERNKPTKN (72 aa)) are could be involved in the assembly of the multisynthetase complex. L-arginine is bound by residues 200–202 (SPN), His-211, Tyr-384, Asp-388, and Gln-412. Positions 201 to 212 (PNIAKEMHVGHL) match the 'HIGH' region motif. Positions 529–543 (NTAAYLLYAFTRIRS) are interaction with tRNA.

The protein belongs to the class-I aminoacyl-tRNA synthetase family. Interacts (via N-terminus) with AIMP1 (via N-terminus); this stimulates its catalytic activity. Interacts (via N-terminus) with LARS2 (via C-terminus). Monomer. Part of a multisubunit complex that groups tRNA ligases for Arg (RARS1), Asp (DARS1), Gln (QARS1), Ile (IARS1), Leu (LARS1), Lys (KARS1), Met (MARS1) the bifunctional ligase for Glu and Pro (EPRS1) and the auxiliary subunits AIMP1/p43, AIMP2/p38 and EEF1E1/p18. Interacts with QARS1. Part of a complex composed of RARS1, QARS1 and AIMP1.

It localises to the cytoplasm. The protein localises to the cytosol. It catalyses the reaction tRNA(Arg) + L-arginine + ATP = L-arginyl-tRNA(Arg) + AMP + diphosphate. Its function is as follows. Forms part of a macromolecular complex that catalyzes the attachment of specific amino acids to cognate tRNAs during protein synthesis. Modulates the secretion of AIMP1 and may be involved in generation of the inflammatory cytokine EMAP2 from AIMP1. In Homo sapiens (Human), this protein is Arginine--tRNA ligase, cytoplasmic.